The sequence spans 241 residues: 3-oxoacyl-[acyl-carrier-protein] reductase FabG (241 aa).

NADP(+) is bound by residues 13–16, Ser38, 57–58, and Asn83; these read GASS and EV. Position 135 (Ser135) interacts with substrate. Catalysis depends on Tyr148, which acts as the Proton acceptor. NADP(+)-binding positions include 148–152 and Ile181; that span reads YCASK.

This sequence belongs to the short-chain dehydrogenases/reductases (SDR) family. In terms of assembly, homotetramer.

The catalysed reaction is a (3R)-hydroxyacyl-[ACP] + NADP(+) = a 3-oxoacyl-[ACP] + NADPH + H(+). The protein operates within lipid metabolism; fatty acid biosynthesis. Catalyzes the NADPH-dependent reduction of beta-ketoacyl-ACP substrates to beta-hydroxyacyl-ACP products, the first reductive step in the elongation cycle of fatty acid biosynthesis. The protein is 3-oxoacyl-[acyl-carrier-protein] reductase FabG (fabG) of Rickettsia prowazekii (strain Madrid E).